Consider the following 191-residue polypeptide: Fe/S biogenesis protein NfuA (191 aa).

[4Fe-4S] cluster is bound by residues C149 and C152.

This sequence belongs to the NfuA family. As to quaternary structure, homodimer. [4Fe-4S] cluster serves as cofactor.

Functionally, involved in iron-sulfur cluster biogenesis. Binds a 4Fe-4S cluster, can transfer this cluster to apoproteins, and thereby intervenes in the maturation of Fe/S proteins. Could also act as a scaffold/chaperone for damaged Fe/S proteins. This is Fe/S biogenesis protein NfuA from Salmonella typhi.